Reading from the N-terminus, the 132-residue chain is Small ribosomal subunit protein uS12 (132 aa).

Residue D89 is modified to 3-methylthioaspartic acid. Positions 103–132 (DTSGVADRRQSRSKYGAKQPKEGGAAKGKK) are disordered.

This sequence belongs to the universal ribosomal protein uS12 family. In terms of assembly, part of the 30S ribosomal subunit. Contacts proteins S8 and S17. May interact with IF1 in the 30S initiation complex.

Functionally, with S4 and S5 plays an important role in translational accuracy. In terms of biological role, interacts with and stabilizes bases of the 16S rRNA that are involved in tRNA selection in the A site and with the mRNA backbone. Located at the interface of the 30S and 50S subunits, it traverses the body of the 30S subunit contacting proteins on the other side and probably holding the rRNA structure together. The combined cluster of proteins S8, S12 and S17 appears to hold together the shoulder and platform of the 30S subunit. This is Small ribosomal subunit protein uS12 from Chlorobium phaeovibrioides (strain DSM 265 / 1930) (Prosthecochloris vibrioformis (strain DSM 265)).